A 138-amino-acid polypeptide reads, in one-letter code: Ribulose bisphosphate carboxylase small subunit (138 aa).

Belongs to the RuBisCO small chain family. In terms of assembly, heterohexadecamer of 8 large and 8 small subunits.

The protein resides in the plastid. Its subcellular location is the chloroplast. Its function is as follows. RuBisCO catalyzes two reactions: the carboxylation of D-ribulose 1,5-bisphosphate, the primary event in carbon dioxide fixation, as well as the oxidative fragmentation of the pentose substrate in the photorespiration process. Both reactions occur simultaneously and in competition at the same active site. Although the small subunit is not catalytic it is essential for maximal activity. This Pyropia dentata (Red alga) protein is Ribulose bisphosphate carboxylase small subunit.